We begin with the raw amino-acid sequence, 342 residues long: Dihydroorotate dehydrogenase (quinone) (342 aa).

FMN contacts are provided by residues 61–65 and threonine 85; that span reads AGLDK. Lysine 65 contacts substrate. 110–114 lines the substrate pocket; it reads NRMGF. Residues asparagine 138 and asparagine 171 each contribute to the FMN site. Asparagine 171 contacts substrate. Residue serine 174 is the Nucleophile of the active site. Residue asparagine 176 coordinates substrate. FMN is bound by residues lysine 216 and threonine 244. Substrate is bound at residue 245-246; it reads NT. Residues glycine 267, glycine 296, and 317-318 each bind FMN; that span reads YS.

The protein belongs to the dihydroorotate dehydrogenase family. Type 2 subfamily. In terms of assembly, monomer. FMN is required as a cofactor.

It localises to the cell membrane. The enzyme catalyses (S)-dihydroorotate + a quinone = orotate + a quinol. It participates in pyrimidine metabolism; UMP biosynthesis via de novo pathway; orotate from (S)-dihydroorotate (quinone route): step 1/1. Functionally, catalyzes the conversion of dihydroorotate to orotate with quinone as electron acceptor. The chain is Dihydroorotate dehydrogenase (quinone) from Pseudomonas paraeruginosa (strain DSM 24068 / PA7) (Pseudomonas aeruginosa (strain PA7)).